The primary structure comprises 444 residues: MNLKIRIIGAGLAGCEAAWQCARRGLDVELYEMRPVKSTPAHQTSDFAELVCSNSLKSAGENSAPWLLKEEMRRGGSLLLEIAQKTSVPAGHALAVDRGAFAAEVTRVIEAEPRIRVVRGEVTKIDENDALTVIATGPLTSDALSQEIARLSGNTHLYFYDSISPIVEADSIDMSRVYMAARYDKGTADYINCPMNKEEYDRFLDALIEAHSVDAKEWENLNYFEGCLPIEEIARRGRDTLRFGPMKPVGLTDPKTGRYPYAVVQLRQENLRADSYNLVGFQNHLKYGDQARVMRLIPGLENAKFLRYGQIHRNTYINSPTLLTETLRMKEHPNVFFAGQISGVEGYVESIATGQMAGMHVSTVAMGHEPVAPPRATAFGSLVNYICHAEAKHFQPANITFDLLPQLDEAARRKVRDKKERHRMVCEAALKEFDGWLATSQIFQ.

9–14 (GAGLAG) is a binding site for FAD.

Belongs to the MnmG family. TrmFO subfamily. FAD is required as a cofactor.

The protein resides in the cytoplasm. It catalyses the reaction uridine(54) in tRNA + (6R)-5,10-methylene-5,6,7,8-tetrahydrofolate + NADH + H(+) = 5-methyluridine(54) in tRNA + (6S)-5,6,7,8-tetrahydrofolate + NAD(+). The enzyme catalyses uridine(54) in tRNA + (6R)-5,10-methylene-5,6,7,8-tetrahydrofolate + NADPH + H(+) = 5-methyluridine(54) in tRNA + (6S)-5,6,7,8-tetrahydrofolate + NADP(+). Its function is as follows. Catalyzes the folate-dependent formation of 5-methyl-uridine at position 54 (M-5-U54) in all tRNAs. The polypeptide is Methylenetetrahydrofolate--tRNA-(uracil-5-)-methyltransferase TrmFO (Koribacter versatilis (strain Ellin345)).